Here is a 122-residue protein sequence, read N- to C-terminus: Large ribosomal subunit protein uL14 (122 aa).

It belongs to the universal ribosomal protein uL14 family. In terms of assembly, part of the 50S ribosomal subunit. Forms a cluster with proteins L3 and L19. In the 70S ribosome, L14 and L19 interact and together make contacts with the 16S rRNA in bridges B5 and B8.

Functionally, binds to 23S rRNA. Forms part of two intersubunit bridges in the 70S ribosome. The polypeptide is Large ribosomal subunit protein uL14 (Chloroflexus aurantiacus (strain ATCC 29366 / DSM 635 / J-10-fl)).